The sequence spans 480 residues: Glutamate--tRNA ligase 2 (480 aa).

The short motif at 15–25 (PSPTGYLHVGG) is the 'HIGH' region element. The short motif at 248-252 (RLSKR) is the 'KMSKS' region element. Residue lysine 251 participates in ATP binding.

This sequence belongs to the class-I aminoacyl-tRNA synthetase family. Glutamate--tRNA ligase type 1 subfamily. As to quaternary structure, monomer.

The protein resides in the cytoplasm. It catalyses the reaction tRNA(Glu) + L-glutamate + ATP = L-glutamyl-tRNA(Glu) + AMP + diphosphate. Functionally, catalyzes the attachment of glutamate to tRNA(Glu) in a two-step reaction: glutamate is first activated by ATP to form Glu-AMP and then transferred to the acceptor end of tRNA(Glu). The chain is Glutamate--tRNA ligase 2 from Koribacter versatilis (strain Ellin345).